The sequence spans 395 residues: Extracellular cysteine protease (395 aa).

A signal peptide spans 1–30; that stretch reads MKKKLSYMITIMLAFTLSLALGLFFNSAHA. A propeptide spanning residues 31-221 is cleaved from the precursor; the sequence is DSLPQKNGAN…TLEYQSTRNE (191 aa). Catalysis depends on residues cysteine 245, histidine 341, and asparagine 362.

This sequence belongs to the peptidase C47 family. Proteolytically cleaved.

The protein resides in the secreted. It is found in the cell wall. In terms of biological role, cysteine protease able to cleave elastin, insulin, myoglobin, fibronectin, fibrinogen, HMW-kininogen, alpha-1-protease inhibitor and alpha-1-antitrypsin. Along with other extracellular proteases may contribute to the colonization and infection of human tissues. In Staphylococcus epidermidis (strain ATCC 35984 / DSM 28319 / BCRC 17069 / CCUG 31568 / BM 3577 / RP62A), this protein is Extracellular cysteine protease (ecpA).